The chain runs to 172 residues: 3-hydroxydecanoyl-[acyl-carrier-protein] dehydratase (172 aa).

Histidine 71 is a catalytic residue.

Belongs to the thioester dehydratase family. FabA subfamily. In terms of assembly, homodimer.

Its subcellular location is the cytoplasm. The enzyme catalyses a (3R)-hydroxyacyl-[ACP] = a (2E)-enoyl-[ACP] + H2O. The catalysed reaction is (3R)-hydroxydecanoyl-[ACP] = (2E)-decenoyl-[ACP] + H2O. It catalyses the reaction (2E)-decenoyl-[ACP] = (3Z)-decenoyl-[ACP]. It participates in lipid metabolism; fatty acid biosynthesis. Its function is as follows. Necessary for the introduction of cis unsaturation into fatty acids. Catalyzes the dehydration of (3R)-3-hydroxydecanoyl-ACP to E-(2)-decenoyl-ACP and then its isomerization to Z-(3)-decenoyl-ACP. Can catalyze the dehydratase reaction for beta-hydroxyacyl-ACPs with saturated chain lengths up to 16:0, being most active on intermediate chain length. In Klebsiella pneumoniae subsp. pneumoniae (strain ATCC 700721 / MGH 78578), this protein is 3-hydroxydecanoyl-[acyl-carrier-protein] dehydratase.